The primary structure comprises 211 residues: Putative ATP-dependent Clp protease proteolytic subunit-like (211 aa).

Residues 1–24 (MTRPSARHVLPEFTERTSAGTRTS) form a disordered region. The active site involves His129.

The protein belongs to the peptidase S14 family.

In terms of biological role, has lost one of the conserved residue (Ser) proposed to be part of the active site. Therefore it could be inactive. The sequence is that of Putative ATP-dependent Clp protease proteolytic subunit-like from Streptomyces coelicolor (strain ATCC BAA-471 / A3(2) / M145).